Here is a 146-residue protein sequence, read N- to C-terminus: Small ribosomal subunit protein uS5 (146 aa).

The S5 DRBM domain maps to 8–71 (FEEVIVNIGR…DDAFKNIIDV (64 aa)).

This sequence belongs to the universal ribosomal protein uS5 family. As to quaternary structure, part of the 30S ribosomal subunit. Contacts proteins S4 and S8.

In terms of biological role, with S4 and S12 plays an important role in translational accuracy. Located at the back of the 30S subunit body where it stabilizes the conformation of the head with respect to the body. The sequence is that of Small ribosomal subunit protein uS5 from Campylobacter hominis (strain ATCC BAA-381 / DSM 21671 / CCUG 45161 / LMG 19568 / NCTC 13146 / CH001A).